The chain runs to 107 residues: Iron-binding protein IscA (107 aa).

Fe cation is bound by residues Cys-35, Cys-99, and Cys-101.

Belongs to the HesB/IscA family. Homodimer; may form tetramers and higher multimers. Fe cation serves as cofactor.

Its function is as follows. Is able to transfer iron-sulfur clusters to apo-ferredoxin. Multiple cycles of [2Fe2S] cluster formation and transfer are observed, suggesting that IscA acts catalytically. Recruits intracellular free iron so as to provide iron for the assembly of transient iron-sulfur cluster in IscU in the presence of IscS, L-cysteine and the thioredoxin reductase system TrxA/TrxB. In Pectobacterium carotovorum subsp. carotovorum (strain PC1), this protein is Iron-binding protein IscA.